We begin with the raw amino-acid sequence, 471 residues long: Indole-3-acetate beta-glucosyltransferase (471 aa).

Histidine 15 serves as the catalytic Proton acceptor. Histidine 15 is an an anthocyanidin binding site. The active-site Charge relay is the aspartate 107. UDP-alpha-D-glucose is bound by residues threonine 129, glutamine 344, histidine 359, tryptophan 362, asparagine 363, serine 364, glutamate 367, aspartate 383, and glutamine 384.

Belongs to the UDP-glycosyltransferase family.

It catalyses the reaction (indol-3-yl)acetate + UDP-alpha-D-glucose = 1-O-(indol-3-ylacetyl)-beta-D-glucose + UDP. It functions in the pathway plant hormone metabolism; auxin conjugation. This is Indole-3-acetate beta-glucosyltransferase (IAGLU) from Zea mays (Maize).